The following is a 141-amino-acid chain: HTH-type transcriptional regulator LrpA (141 aa).

Residues 2-63 (IDERDKIILE…RINPKKLGYS (62 aa)) enclose the HTH asnC-type domain. A DNA-binding region (H-T-H motif) is located at residues 21–40 (FTEIAKKLGISETAVRKRVK).

In terms of assembly, homooctamer; tetramer of dimers.

In terms of biological role, DNA-binding protein that negatively regulates its own transcription. Interferes with RNA polymerase (RNAP) recruitment by inhibiting the association of RNAP with the TBP-TFB promoter complex. The protein is HTH-type transcriptional regulator LrpA (lrpA) of Pyrococcus horikoshii (strain ATCC 700860 / DSM 12428 / JCM 9974 / NBRC 100139 / OT-3).